The primary structure comprises 370 residues: 1-propanol dehydrogenase PduQ (370 aa).

It belongs to the iron-containing alcohol dehydrogenase family. As to quaternary structure, interacts with PduP, probably via the N-terminus of PduQ. Fe cation serves as cofactor.

It is found in the bacterial microcompartment. The catalysed reaction is 1-propanol + NAD(+) = propanal + NADH + H(+). Its pathway is polyol metabolism; 1,2-propanediol degradation. With respect to regulation, enzyme is oxygen sensitive. Functionally, an iron-dependent alcohol dehydrogenase required for optimal 1,2-propanediol (1,2-PD) degradation. NAD(+) and NADH are regenerated internally within the bacterial microcompartment (BMC) dedicated to 1,2-PD degradation by the PduP and PduQ enzymes, which reduce NAD(+) and oxidize NADH respectively, although there must also be cofactor transport across the BMC. The 1,2-PD-specific bacterial microcompartment (BMC) concentrates low levels of 1,2-PD catabolic enzymes, concentrates volatile reaction intermediates thus enhancing pathway flux and keeps the level of toxic, mutagenic propionaldehyde low. In Salmonella typhimurium (strain LT2 / SGSC1412 / ATCC 700720), this protein is 1-propanol dehydrogenase PduQ.